Here is a 308-residue protein sequence, read N- to C-terminus: Uridine diphosphate glucose pyrophosphatase NUDT22 (308 aa).

F56, Y86, R138, A143, D150, H155, and E157 together coordinate substrate. The Nudix hydrolase domain maps to 117–284 (ADPLGVGAAL…KGAILLYNRH (168 aa)). The Nudix box motif lies at 174-195 (GLLVVRELFSSVLQEICDEVNL). Residues E188 and E192 each coordinate Mg(2+). S273 contacts substrate.

This sequence belongs to the Nudix hydrolase family. The cofactor is Mg(2+).

The enzyme catalyses UDP-sugar + H2O = UMP + alpha-D-aldose 1-phosphate.. Hydrolyzes UDP-glucose to glucose 1-phosphate and UMP and UDP-galactose to galactose 1-phosphate and UMP. Preferred substrate is UDP-glucose. The sequence is that of Uridine diphosphate glucose pyrophosphatase NUDT22 (Nudt22) from Mus musculus (Mouse).